The following is a 255-amino-acid chain: Aliphatic sulfonates import ATP-binding protein SsuB (255 aa).

Positions 12-233 constitute an ABC transporter domain; it reads LLLNAVSKHY…RLGSVRLAEL (222 aa). Residue 44–51 participates in ATP binding; sequence GRSGGGKS.

The protein belongs to the ABC transporter superfamily. Aliphatic sulfonates importer (TC 3.A.1.17.2) family. In terms of assembly, the complex is composed of two ATP-binding proteins (SsuB), two transmembrane proteins (SsuC) and a solute-binding protein (SsuA).

The protein localises to the cell inner membrane. The enzyme catalyses ATP + H2O + aliphatic sulfonate-[sulfonate-binding protein]Side 1 = ADP + phosphate + aliphatic sulfonateSide 2 + [sulfonate-binding protein]Side 1.. Functionally, part of the ABC transporter complex SsuABC involved in aliphatic sulfonates import. Responsible for energy coupling to the transport system. In Shigella flexneri, this protein is Aliphatic sulfonates import ATP-binding protein SsuB.